The sequence spans 302 residues: RNA polymerase sigma factor RpoH (302 aa).

The segment at 57 to 126 (LVTSHLRLVA…IQEYILRSWS (70 aa)) is sigma-70 factor domain-2. Positions 81-84 (ELIS) match the Interaction with polymerase core subunit RpoC motif. Positions 235 to 286 (AMDKLNDREKHILTERRLSDNPKTLEELSQVYGVSRERVRQIEVRAFDKLQK) are sigma-70 factor domain-4. Residues 259-278 (LEELSQVYGVSRERVRQIEV) constitute a DNA-binding region (H-T-H motif).

It belongs to the sigma-70 factor family. RpoH subfamily. Interacts with the RNA polymerase core enzyme.

The protein localises to the cytoplasm. Sigma factors are initiation factors that promote the attachment of RNA polymerase to specific initiation sites and are then released. This sigma factor is involved in regulation of expression of heat shock genes. In Zymomonas mobilis subsp. mobilis (strain ATCC 31821 / ZM4 / CP4), this protein is RNA polymerase sigma factor RpoH.